A 229-amino-acid polypeptide reads, in one-letter code: Protein-L-isoaspartate O-methyltransferase (229 aa).

Ser65 is an active-site residue.

It belongs to the methyltransferase superfamily. L-isoaspartyl/D-aspartyl protein methyltransferase family.

The protein localises to the cytoplasm. The catalysed reaction is [protein]-L-isoaspartate + S-adenosyl-L-methionine = [protein]-L-isoaspartate alpha-methyl ester + S-adenosyl-L-homocysteine. Catalyzes the methyl esterification of L-isoaspartyl residues in peptides and proteins that result from spontaneous decomposition of normal L-aspartyl and L-asparaginyl residues. It plays a role in the repair and/or degradation of damaged proteins. The chain is Protein-L-isoaspartate O-methyltransferase from Chlorobium phaeovibrioides (strain DSM 265 / 1930) (Prosthecochloris vibrioformis (strain DSM 265)).